The following is a 376-amino-acid chain: Mitogen-activated protein kinase 6 (376 aa).

The Protein kinase domain occupies 43 to 329 (APPIRPIGRG…VDEALHHPYL (287 aa)). Residues 49–57 (IGRGAYGIV) and Lys72 contribute to the ATP site. The active-site Proton acceptor is the Asp169. Residue Thr201 is modified to Phosphothreonine. Positions 201–203 (TEY) match the TXY motif. Position 203 is a phosphotyrosine (Tyr203).

This sequence belongs to the protein kinase superfamily. CMGC Ser/Thr protein kinase family. MAP kinase subfamily. Post-translationally, dually phosphorylated on Thr-201 and Tyr-203, which activates the enzyme.

It catalyses the reaction L-seryl-[protein] + ATP = O-phospho-L-seryl-[protein] + ADP + H(+). The catalysed reaction is L-threonyl-[protein] + ATP = O-phospho-L-threonyl-[protein] + ADP + H(+). Activated by threonine and tyrosine phosphorylation. In Oryza sativa subsp. japonica (Rice), this protein is Mitogen-activated protein kinase 6 (MPK6).